The sequence spans 818 residues: Lon protease (818 aa).

The 203-residue stretch at 14-216 (LPVLPLRDVV…KVFALIEREI (203 aa)) folds into the Lon N-terminal domain. Residue 370–377 (GPPGVGKT) coordinates ATP. The Lon proteolytic domain maps to 605–786 (ESLVGIVTGL…DEVIKVALMH (182 aa)). Residues Ser692 and Lys735 contribute to the active site.

The protein belongs to the peptidase S16 family. Homohexamer. Organized in a ring with a central cavity.

It localises to the cytoplasm. The catalysed reaction is Hydrolysis of proteins in presence of ATP.. Functionally, ATP-dependent serine protease that mediates the selective degradation of mutant and abnormal proteins as well as certain short-lived regulatory proteins. Required for cellular homeostasis and for survival from DNA damage and developmental changes induced by stress. Degrades polypeptides processively to yield small peptide fragments that are 5 to 10 amino acids long. Binds to DNA in a double-stranded, site-specific manner. The chain is Lon protease from Wolbachia pipientis subsp. Culex pipiens (strain wPip).